We begin with the raw amino-acid sequence, 598 residues long: Elongation factor 4 (598 aa).

Positions 2-184 constitute a tr-type G domain; sequence KNIRNFSIIA…EIVAKIPAPE (183 aa). GTP-binding positions include 14 to 19 and 131 to 134; these read DHGKST and NKID.

The protein belongs to the TRAFAC class translation factor GTPase superfamily. Classic translation factor GTPase family. LepA subfamily.

It localises to the cell inner membrane. The catalysed reaction is GTP + H2O = GDP + phosphate + H(+). Required for accurate and efficient protein synthesis under certain stress conditions. May act as a fidelity factor of the translation reaction, by catalyzing a one-codon backward translocation of tRNAs on improperly translocated ribosomes. Back-translocation proceeds from a post-translocation (POST) complex to a pre-translocation (PRE) complex, thus giving elongation factor G a second chance to translocate the tRNAs correctly. Binds to ribosomes in a GTP-dependent manner. The protein is Elongation factor 4 of Haemophilus influenzae (strain ATCC 51907 / DSM 11121 / KW20 / Rd).